Reading from the N-terminus, the 242-residue chain is Lysosomal membrane ascorbate-dependent ferrireductase CYB561A3 (242 aa).

Residues 1-7 lie on the Cytoplasmic side of the membrane; that stretch reads MVSGRFY. The chain crosses the membrane as a helical span at residues 8 to 28; the sequence is LSCLLLGSLGSMCILFTIYWM. Residues 12–219 enclose the Cytochrome b561 domain; it reads LLGSLGSMCI…FGLLVLYILL (208 aa). At 29–45 the chain is on the lumenal side; it reads QYWRGGFAWNGSIYMFN. An N-linked (GlcNAc...) asparagine glycan is attached at asparagine 38. The chain crosses the membrane as a helical span at residues 46-66; sequence WHPVLMVAGMVVFYGGASLVY. The heme b site is built by histidine 47 and arginine 67. Residues 67 to 83 lie on the Cytoplasmic side of the membrane; it reads RLPQSWVGPKLPWKLLH. The L-ascorbate site is built by lysine 76 and lysine 80. Histidine 83 serves as a coordination point for heme b. A helical transmembrane segment spans residues 84–104; the sequence is AALHLMAFVLTVVGLVAVFTF. Residues 105-119 lie on the Lumenal side of the membrane; it reads HNHGRTANLYSLHSW. Heme b-binding positions include 112 to 115 and histidine 117; that span reads NLYS. A helical transmembrane segment spans residues 120-140; it reads LGITTVFLFACQWFLGFAVFL. Residues 141-154 lie on the Cytoplasmic side of the membrane; sequence LPWASMWLRSLLKP. Arginine 149 contributes to the L-ascorbate binding site. A helical transmembrane segment spans residues 155-175; that stretch reads IHVFFGAAILSLSIASVISGI. Heme b is bound by residues histidine 156 and glutamate 177. Over 176–202 the chain is Lumenal; the sequence is NEKLFFSLKNTTRPYHSLPSEAVFANS. Residues 203-223 form a helical membrane-spanning segment; the sequence is TGMLVVAFGLLVLYILLASSW. Residue lysine 224 participates in heme b binding. The Cytoplasmic segment spans residues 224–242; the sequence is KRPEPGILTDRQPLLHDGE.

As to quaternary structure, homodimer. Heme b serves as cofactor. In terms of processing, N-glycosylated.

It localises to the late endosome membrane. The protein localises to the lysosome membrane. It catalyses the reaction Fe(3+)(out) + L-ascorbate(in) = monodehydro-L-ascorbate radical(in) + Fe(2+)(out) + H(+). Transmembrane reductase that uses ascorbate as an electron donor in the cytoplasm and transfers electrons across membranes to reduce iron cations Fe(3+) into Fe(2+) in the lumen of the late endosome and lysosome. Reduced iron can then be extruded from the late endosome and lysosome to the cytoplasm by divalent metal-specific transporters. It is therefore most probably involved in endosomal and lysosomal cellular iron homeostasis. This Homo sapiens (Human) protein is Lysosomal membrane ascorbate-dependent ferrireductase CYB561A3.